A 78-amino-acid chain; its full sequence is MVRIRLMRLGAKKKPFYRVVVADAKARRNGPFIEIIGTYNPKTDPPEVNLNMERVNYWIDKGAQPSDTVKKLIERVSA.

The protein belongs to the bacterial ribosomal protein bS16 family.

This Thermodesulfovibrio yellowstonii (strain ATCC 51303 / DSM 11347 / YP87) protein is Small ribosomal subunit protein bS16.